The following is a 108-amino-acid chain: uncharacterized protein (108 aa).

A Phosphothreonine modification is found at Thr56. A disordered region spans residues 89–108 (AQAKGTEQAEALKKGTSKWF).

Its subcellular location is the cytoplasm. This is an uncharacterized protein from Schizosaccharomyces pombe (strain 972 / ATCC 24843) (Fission yeast).